We begin with the raw amino-acid sequence, 104 residues long: ATP-dependent Clp protease adapter protein ClpS (104 aa).

The segment at 1-20 is disordered; sequence MSPDPHEDLGDVLTEPTQKT.

Belongs to the ClpS family. Binds to the N-terminal domain of the chaperone ClpA.

In terms of biological role, involved in the modulation of the specificity of the ClpAP-mediated ATP-dependent protein degradation. This Desulfatibacillum aliphaticivorans protein is ATP-dependent Clp protease adapter protein ClpS.